The following is a 453-amino-acid chain: Choline kinase alpha (453 aa).

The interval 22–81 (CGGNAAPTPGVGQQRDAAGELESKQLGGRTQPLALPPPPPPPLPLPPPPSPPLADEQPEP) is disordered. Over residues 55-73 (ALPPPPPPPLPLPPPPSPP) the composition is skewed to pro residues. Position 71 is a phosphoserine (serine 71). Residues 113-119 (RGGLSNM), arginine 142, and 203-209 (QFIPSRR) each bind ATP. 115–117 (GLS) lines the phosphocholine pocket. Lysine 243 carries the post-translational modification N6-acetyllysine. Serine 275 bears the Phosphoserine mark. ATP is bound by residues glutamine 304 and aspartate 326.

This sequence belongs to the choline/ethanolamine kinase family. Homodimer. Heterodimer with CHKB. As to quaternary structure, monomer; acetylation by KAT5 promotes dissociation of the homodimer and monomerization. Post-translationally, phosphorylated at Ser-275 by AMPK in response to glucose deprivation, leading to localization to lipid droplets. In terms of processing, acetylated by KAT5 at Lys-243 following phosphorylation by AMPK, leading to monomerization and conversion into a tyrosine-protein kinase. Expressed ubiquitously with the highest level in testis.

Its subcellular location is the cytoplasm. The protein resides in the cytosol. It is found in the lipid droplet. The catalysed reaction is choline + ATP = phosphocholine + ADP + H(+). The enzyme catalyses ethanolamine + ATP = phosphoethanolamine + ADP + H(+). It catalyses the reaction L-tyrosyl-[protein] + ATP = O-phospho-L-tyrosyl-[protein] + ADP + H(+). The protein operates within phospholipid metabolism; phosphatidylcholine biosynthesis; phosphocholine from choline: step 1/1. Its pathway is phospholipid metabolism; phosphatidylethanolamine biosynthesis; phosphatidylethanolamine from ethanolamine: step 1/3. In terms of biological role, plays a key role in phospholipid biosynthesis by catalyzing the phosphorylation of free choline to phosphocholine, the first step in phosphatidylcholine biosynthesis. Also phosphorylates ethanolamine, thereby contributing to phosphatidylethanolamine biosynthesis. Has higher activity with choline. This isoform plays a key role in lipolysis of lipid droplets following glucose deprivation. In response to glucose deprivation, phosphorylated by AMPK, promoting localization to lipid droplets. Phosphorylation is followed by acetylation by KAT5, leading to dissociation of the homodimer into a monomer. Monomeric CHKA isoform 1 is converted into a tyrosine-protein kinase, which phosphorylates lipid droplet structural proteins PLIN2 and PLIN3, leading to lipolysis of lipid droplets. This Mus musculus (Mouse) protein is Choline kinase alpha (Chka).